The primary structure comprises 94 residues: Large ribosomal subunit protein bL27 (94 aa).

The propeptide occupies 1–9; the sequence is MLRLDLQFF.

Belongs to the bacterial ribosomal protein bL27 family. In terms of processing, the N-terminus is cleaved by ribosomal processing cysteine protease Prp.

The polypeptide is Large ribosomal subunit protein bL27 (Bacillus velezensis (strain DSM 23117 / BGSC 10A6 / LMG 26770 / FZB42) (Bacillus amyloliquefaciens subsp. plantarum)).